The following is a 147-amino-acid chain: MNDIFYMKRAIELSKLGEFTTAPNPNVGCVIVKNNIIVGEGWHEQAGKNHAEINALIMAGEKAQGGTAYVTLEPCNHFGKTPPCCNALIKSGINRVVISNIDPNPKISGNGILYLKKHGICVKTGLLSKESKQYNKGFFKRMKTGFP.

One can recognise a CMP/dCMP-type deaminase domain in the interval 1-123 (MNDIFYMKRA…YLKKHGICVK (123 aa)). A Zn(2+)-binding site is contributed by histidine 50. Glutamate 52 serves as the catalytic Proton donor. The Zn(2+) site is built by cysteine 75 and cysteine 84.

Belongs to the cytidine and deoxycytidylate deaminase family. It depends on Zn(2+) as a cofactor.

The catalysed reaction is 2,5-diamino-6-hydroxy-4-(5-phosphoribosylamino)-pyrimidine + H2O + H(+) = 5-amino-6-(5-phospho-D-ribosylamino)uracil + NH4(+). The protein operates within cofactor biosynthesis; riboflavin biosynthesis; 5-amino-6-(D-ribitylamino)uracil from GTP: step 2/4. This is Diaminohydroxyphosphoribosylamino-pyrimidine deaminase (ribD1) from Buchnera aphidicola subsp. Acyrthosiphon pisum (strain APS) (Acyrthosiphon pisum symbiotic bacterium).